Here is a 310-residue protein sequence, read N- to C-terminus: p-hydroxybenzoic acid efflux pump subunit AaeA (310 aa).

A helical membrane pass occupies residues 12 to 32 (AITVVLVILAFIAIFNAWVYY).

The protein belongs to the membrane fusion protein (MFP) (TC 8.A.1) family.

It is found in the cell inner membrane. Forms an efflux pump with AaeB. This is p-hydroxybenzoic acid efflux pump subunit AaeA from Escherichia coli O127:H6 (strain E2348/69 / EPEC).